A 969-amino-acid chain; its full sequence is MMDFLKRFFGSSQERILKRFQKLVEEVNACDEKFSSLSDDELREKTPQLKQRYQDGESLDKLLPEAYGVVKNVCRRLAGTPVEVSGYHQQWDMVPYDVQILGAIAMHKGFITEMQTGEGKTLTAVMPLYLNALTGKPVHLVTVNDYLAQRDCEWVGSVLRWLGLTTGVLVSGSPPEKRKAIYQCDVVYGTASEFGFDYLRDNSIATRKEEQVGRGFYFAIIDEIDSVLIDEARTPLIISGPGEKHNPVYFELKDRVAELVYFQREMCNHIAIEARKVLDPFLGTDVLPKDKKVMEAISEACRALWLVSKGMPLNRVLRRVREHPDLRAMIDKWDVFYHAEQNKEECLEKLSSLYIVVDEHNNDFELTDKGMLQWIEKIGGAAEDFVMMDMGHEYALIEEDATLSPADKLNRKIAVSEKDTQRKARAHGLRQLLRAHLLMEKDIDYIVRDDQIVIIDEHTGRPQPGRRFSEGLHQAIEAKEHVTIRKESQTFATVTLQNFFRLYEKLAGMTGTAITESREFKEIYSLYVLQVPTFKPCLRIDHNDAFYMTEREKYQAIVAEIISAHRSGKPILIGTESVEVSEKLSRILRQNRINHTVLNAKNHAQEAEIIAGAGKVGAVTVATNMAGRGTDIKLDEEAVAAGGLYVIGTSRHQSRRIDRQLRGRCARLGDPGAAKFFLSFEDRLMRLFASPKLNTLIRHFRPPEGEAMSDPMFDRLIETAQKRVEGRNYTIRKHTLEYDDVMNKQRQTIYAFRNDVLHAEDLFVVAKEQIEHVALALAFLILKDAHADHCSLPKIEEWLSYSFPVKLDDQEIRRLGDVDAVADYIGDLLIEAFDVKFSAMLAEFTEIIGSAANAQGICNDILRSVIISHIDEEWKVHLVDMDLLRSEVGLRSVGQKDPLIEFKNESFLLFEGLIRDIRIAIVKHLFALELSLTRSDRPDNAIPTVATAFHNHDNFRPMELTIVGEEEES.

ATP is bound by residues Gln-99, 117–121 (GEGKT), and Asp-631.

The protein belongs to the SecA family. In terms of assembly, monomer and homodimer. Part of the essential Sec protein translocation apparatus which comprises SecA, SecYEG and auxiliary proteins SecDF. Other proteins may also be involved.

The protein localises to the cell inner membrane. It localises to the cytoplasm. It catalyses the reaction ATP + H2O + cellular proteinSide 1 = ADP + phosphate + cellular proteinSide 2.. Functionally, part of the Sec protein translocase complex. Interacts with the SecYEG preprotein conducting channel. Has a central role in coupling the hydrolysis of ATP to the transfer of proteins into and across the cell membrane, serving as an ATP-driven molecular motor driving the stepwise translocation of polypeptide chains across the membrane. The polypeptide is Protein translocase subunit SecA (Chlamydia trachomatis serovar L2 (strain ATCC VR-902B / DSM 19102 / 434/Bu)).